The sequence spans 214 residues: Heat shock protein 26 (214 aa).

The residue at position 2 (Ser-2) is an N-acetylserine. The residue at position 42 (Thr-42) is a Phosphothreonine. Residues 86–207 enclose the sHSP domain; that stretch reads GFPRSVAVPV…KNHVKKIEVS (122 aa). Ser-90 carries the post-translational modification Phosphoserine. Thr-163 carries the post-translational modification Phosphothreonine. A disordered region spans residues 192-214; sequence KPQKDGKNHVKKIEVSSQESWGN. The segment covering 193–205 has biased composition (basic and acidic residues); the sequence is PQKDGKNHVKKIE. 2 positions are modified to phosphoserine: Ser-208 and Ser-211.

It belongs to the small heat shock protein (HSP20) family. In terms of assembly, present in large complexes.

Not known. One of the major polypeptides produced on heat shock. In Saccharomyces cerevisiae (strain ATCC 204508 / S288c) (Baker's yeast), this protein is Heat shock protein 26 (HSP26).